A 170-amino-acid chain; its full sequence is Ribosome maturation factor RimM (170 aa).

The PRC barrel domain maps to 96–169; it reads EGEFYACDVE…VVQLATLEGL (74 aa).

It belongs to the RimM family. In terms of assembly, binds ribosomal protein uS19.

It is found in the cytoplasm. Its function is as follows. An accessory protein needed during the final step in the assembly of 30S ribosomal subunit, possibly for assembly of the head region. Essential for efficient processing of 16S rRNA. May be needed both before and after RbfA during the maturation of 16S rRNA. It has affinity for free ribosomal 30S subunits but not for 70S ribosomes. This is Ribosome maturation factor RimM from Sorangium cellulosum (strain So ce56) (Polyangium cellulosum (strain So ce56)).